The following is a 655-amino-acid chain: p-hydroxybenzoic acid efflux pump subunit AaeB (655 aa).

11 helical membrane-spanning segments follow: residues 13-33 (FAVKLASAIVLALFVGFHFQL), 38-58 (WAVLTAAIVAAGPAFAAGGEP), 69-89 (LRIIGTFIGCIAALTIIILMI), 93-113 (LLMVLVCCIWAGFCTWLSSLV), 121-141 (WGLAGYTALIIVITIQTEPLL), 152-172 (EIVIGIVCAIVADLLFSPRSI), 370-390 (LFWLWTGWTSGSGAMVMIAVV), 407-427 (FLYGTIAALPLGALYFLVILP), 431-451 (QSMLLLCISLAVMAFFIGIEV), 459-479 (LGALASTINILVLDNPMTFHF), and 482-502 (FLDSALGQLVGCFLAMMVILL).

The protein belongs to the aromatic acid exporter ArAE (TC 2.A.85) family.

The protein resides in the cell inner membrane. Its function is as follows. Forms an efflux pump with AaeA. Could function as a metabolic relief valve, allowing to eliminate certain compounds when they accumulate to high levels in the cell. The protein is p-hydroxybenzoic acid efflux pump subunit AaeB of Enterobacter cloacae subsp. cloacae (strain ATCC 13047 / DSM 30054 / NBRC 13535 / NCTC 10005 / WDCM 00083 / NCDC 279-56).